The sequence spans 445 residues: Tubulin beta-1 chain (445 aa).

Q11, E69, S138, G142, T143, G144, N204, and N226 together coordinate GTP. E69 is a binding site for Mg(2+). The disordered stretch occupies residues 426–445; it reads QDATAEDEEEYEDEEEEMAA. Residues 429-445 are compositionally biased toward acidic residues; it reads TAEDEEEYEDEEEEMAA.

It belongs to the tubulin family. Dimer of alpha and beta chains. A typical microtubule is a hollow water-filled tube with an outer diameter of 25 nm and an inner diameter of 15 nM. Alpha-beta heterodimers associate head-to-tail to form protofilaments running lengthwise along the microtubule wall with the beta-tubulin subunit facing the microtubule plus end conferring a structural polarity. Microtubules usually have 13 protofilaments but different protofilament numbers can be found in some organisms and specialized cells. It depends on Mg(2+) as a cofactor.

It is found in the cytoplasm. It localises to the cytoskeleton. Functionally, tubulin is the major constituent of microtubules, a cylinder consisting of laterally associated linear protofilaments composed of alpha- and beta-tubulin heterodimers. Microtubules grow by the addition of GTP-tubulin dimers to the microtubule end, where a stabilizing cap forms. Below the cap, tubulin dimers are in GDP-bound state, owing to GTPase activity of alpha-tubulin. The polypeptide is Tubulin beta-1 chain (TUBB1) (Eleusine indica (Goosegrass)).